Here is a 181-residue protein sequence, read N- to C-terminus: MKIAVINGGTRSGGNTDVLAEKAVQGFDAEHIYLQKYPIQPIEDLRHAQGGFRPVQDDYDSIIERILQCHILIFATPIYWFGMSGTLKLFIDRWSQTLRDPRFPDFKQQMSVKQAYVIAVGGDNPKIKGLPLIQQFEHIFHFMGMSFKGYVLGEGNRPGDILRDHQALSAASRLLKRSDAI.

This sequence belongs to the SsuE family. FMN is required as a cofactor.

Its function is as follows. Putative NADPH-dependent oxidoreductase. The protein is Putative NAD(P)H-dependent FMN-containing oxidoreductase YwqN (ywqN) of Bacillus subtilis (strain 168).